The sequence spans 348 residues: MRIFLLCLALSLSVFAATIKELTNVVGVRDNQLIGYGLVVGLNGSGDGTSSEFTLQSISNMLQGMNVKVSPGDIKSKNTAAVMVTAKLPAFARSGDKLDVSVASLGDAKSLQGGTLLMTALKGVDGEIYAVAQGSLAIGGLSPRPGAAGTHSTSANVINGAVVEREIPQNFSQSEDLILSLKEADFKTANNIERVLNTIFDTDIAKALDSRTIKLTKPEEFSHVEFMARVLEQDIAYTPESKVIIDERTGTIVAGVNIEVEPILITHKDITIKIDPNNTVALGQNEIDMKDGGILDPVSNTLKITNNKTTVANIARMLNKLGAAPNDIIAIMQNLKRAGAISAELEVI.

Residues 1–16 (MRIFLLCLALSLSVFA) form the signal peptide.

This sequence belongs to the FlgI family. As to quaternary structure, the basal body constitutes a major portion of the flagellar organelle and consists of four rings (L,P,S, and M) mounted on a central rod.

Its subcellular location is the periplasm. The protein localises to the bacterial flagellum basal body. Assembles around the rod to form the L-ring and probably protects the motor/basal body from shearing forces during rotation. This Campylobacter lari (strain RM2100 / D67 / ATCC BAA-1060) protein is Flagellar P-ring protein.